Consider the following 420-residue polypeptide: Mannose-1-phosphate guanylyltransferase regulatory subunit alpha (420 aa).

Residues 2-251 (LKAVILIGGP…DGIWSQIKSA (250 aa)) are substrate-binding domain. Residues E85 and Q247 each coordinate GDP-alpha-D-mannose. The interval 273-420 (LAKHTPGGPR…SRSFTNQIIL (148 aa)) is hexapeptide repeat domain. Residues 356–384 (TPNDPNPNDPRAHMDSESLFKDGKLLPAI) form a C-loop region.

It belongs to the transferase hexapeptide repeat family. As to quaternary structure, component of the GMPPA-GMPPB mannose-1-phosphate guanylyltransferase complex composed of 4 GMPPA subunits and 8 GMPPB subunits; the complex is organized into three layers, a central layer made up of 2 GMPPA dimers sandwiched between two layers each made up of 2 GMPPB dimers. Expressed in the liver (at protein level).

The protein localises to the cytoplasm. In terms of biological role, regulatory subunit of the GMPPA-GMPPB mannose-1-phosphate guanylyltransferase complex; reduces the catalytic activity of GMPPB when part of the complex. Mediates allosteric feedback inhibition of GMPPB catalytic activity upon binding GDP-alpha-D-mannose. Together with GMPPB regulates GDP-alpha-D-mannose levels. The sequence is that of Mannose-1-phosphate guanylyltransferase regulatory subunit alpha (GMPPA) from Sus scrofa (Pig).